We begin with the raw amino-acid sequence, 174 residues long: Ribosome maturation factor RimM (174 aa).

The region spanning 101-174 (AGEFYLADLC…IELLQRWILE (74 aa)) is the PRC barrel domain.

Belongs to the RimM family. Binds ribosomal protein uS19.

The protein resides in the cytoplasm. In terms of biological role, an accessory protein needed during the final step in the assembly of 30S ribosomal subunit, possibly for assembly of the head region. Essential for efficient processing of 16S rRNA. May be needed both before and after RbfA during the maturation of 16S rRNA. It has affinity for free ribosomal 30S subunits but not for 70S ribosomes. The polypeptide is Ribosome maturation factor RimM (Treponema pallidum (strain Nichols)).